Here is a 750-residue protein sequence, read N- to C-terminus: Photosystem I P700 chlorophyll a apoprotein A1 (750 aa).

A run of 8 helical transmembrane segments spans residues 70–93 (VFSA…FHGA), 156–179 (LYST…FHYH), 195–219 (LNHH…HVSL), 291–309 (TVHH…GHMY), 346–369 (WHAQ…HHMY), 385–411 (LSLF…IFMV), 433–455 (AIVS…LYIH), and 531–549 (FLVH…LILL). [4Fe-4S] cluster is bound by residues cysteine 573 and cysteine 582. Transmembrane regions (helical) follow at residues 589–610 (HVFL…HFSW) and 664–686 (LSAY…MFLF). Chlorophyll a' is bound at residue histidine 675. Positions 683 and 691 each coordinate chlorophyll a. Phylloquinone is bound at residue tryptophan 692. Residues 724–744 (AVGVAHYLLGGIATTWAFFLA) form a helical membrane-spanning segment.

It belongs to the PsaA/PsaB family. In terms of assembly, the PsaA/B heterodimer binds the P700 chlorophyll special pair and subsequent electron acceptors. PSI consists of a core antenna complex that captures photons, and an electron transfer chain that converts photonic excitation into a charge separation. The eukaryotic PSI reaction center is composed of at least 11 subunits. P700 is a chlorophyll a/chlorophyll a' dimer, A0 is one or more chlorophyll a, A1 is one or both phylloquinones and FX is a shared 4Fe-4S iron-sulfur center. serves as cofactor.

The protein localises to the plastid. Its subcellular location is the chloroplast thylakoid membrane. The catalysed reaction is reduced [plastocyanin] + hnu + oxidized [2Fe-2S]-[ferredoxin] = oxidized [plastocyanin] + reduced [2Fe-2S]-[ferredoxin]. Its function is as follows. PsaA and PsaB bind P700, the primary electron donor of photosystem I (PSI), as well as the electron acceptors A0, A1 and FX. PSI is a plastocyanin-ferredoxin oxidoreductase, converting photonic excitation into a charge separation, which transfers an electron from the donor P700 chlorophyll pair to the spectroscopically characterized acceptors A0, A1, FX, FA and FB in turn. Oxidized P700 is reduced on the lumenal side of the thylakoid membrane by plastocyanin. The protein is Photosystem I P700 chlorophyll a apoprotein A1 of Huperzia lucidula (Shining clubmoss).